Consider the following 142-residue polypeptide: Large ribosomal subunit protein uL13 (142 aa).

This sequence belongs to the universal ribosomal protein uL13 family. In terms of assembly, part of the 50S ribosomal subunit.

Its function is as follows. This protein is one of the early assembly proteins of the 50S ribosomal subunit, although it is not seen to bind rRNA by itself. It is important during the early stages of 50S assembly. The sequence is that of Large ribosomal subunit protein uL13 from Psychromonas ingrahamii (strain DSM 17664 / CCUG 51855 / 37).